A 255-amino-acid polypeptide reads, in one-letter code: 3-dehydroquinate dehydratase (255 aa).

3-dehydroquinate is bound by residues Glu-47 to Arg-49 and Arg-83. His-144 serves as the catalytic Proton donor/acceptor. Lys-171 serves as the catalytic Schiff-base intermediate with substrate. Residues Arg-214, Ser-233, and Gln-237 each contribute to the 3-dehydroquinate site.

Belongs to the type-I 3-dehydroquinase family. As to quaternary structure, homodimer or homotetramer.

The enzyme catalyses 3-dehydroquinate = 3-dehydroshikimate + H2O. Its pathway is metabolic intermediate biosynthesis; chorismate biosynthesis; chorismate from D-erythrose 4-phosphate and phosphoenolpyruvate: step 3/7. In terms of biological role, involved in the third step of the chorismate pathway, which leads to the biosynthesis of aromatic amino acids. Catalyzes the cis-dehydration of 3-dehydroquinate (DHQ) and introduces the first double bond of the aromatic ring to yield 3-dehydroshikimate. The reaction involves the formation of an imine intermediate between the keto group of 3-dehydroquinate and the epsilon-amino group of Lys-170 at the active site. In Clostridioides difficile (strain 630) (Peptoclostridium difficile), this protein is 3-dehydroquinate dehydratase.